Consider the following 361-residue polypeptide: MKNLFLFCRAGYEKECAAEIQQRAAELNVGGFVKTNNNDAYVVYQCFEDDGADTLVKQLPLDSLIFARQMFAASELLADLPESDRVSPIVAALSEVSKAGELRVETPDTNEAKELSAFCRKFTVPLRQHLKKSGSLLAQENPKRPIIHVCFIGPGRAYAGYSLSNNSSPNFMGIPRLKMAADAPSRSSLKLDEAFAQFVPKEEQEERVRSGMNAVDLGACPGGWTYQLVRRGMFVSAVDNGPMNEKLMETGQVKHFREDGFRFEPQRKNIYWLVCDMVEKPARVAELIEAWAINGWFKEAIFNLKLPMKSRYKEVMAILNTMQDILKENGITEFKLQCKHLYHDRDEVTVHLWLKPSQPWN.

S-adenosyl-L-methionine contacts are provided by residues serine 187, 220 to 223 (CPGG), aspartate 239, aspartate 259, and aspartate 276. Lysine 305 (proton acceptor) is an active-site residue.

The protein belongs to the class I-like SAM-binding methyltransferase superfamily. RNA methyltransferase RlmE family. RlmM subfamily. As to quaternary structure, monomer.

It localises to the cytoplasm. It catalyses the reaction cytidine(2498) in 23S rRNA + S-adenosyl-L-methionine = 2'-O-methylcytidine(2498) in 23S rRNA + S-adenosyl-L-homocysteine + H(+). Its function is as follows. Catalyzes the 2'-O-methylation at nucleotide C2498 in 23S rRNA. The protein is Ribosomal RNA large subunit methyltransferase M of Shewanella oneidensis (strain ATCC 700550 / JCM 31522 / CIP 106686 / LMG 19005 / NCIMB 14063 / MR-1).